Reading from the N-terminus, the 484-residue chain is Aspartyl/glutamyl-tRNA(Asn/Gln) amidotransferase subunit B (484 aa).

Belongs to the GatB/GatE family. GatB subfamily. As to quaternary structure, heterotrimer of A, B and C subunits.

The enzyme catalyses L-glutamyl-tRNA(Gln) + L-glutamine + ATP + H2O = L-glutaminyl-tRNA(Gln) + L-glutamate + ADP + phosphate + H(+). It carries out the reaction L-aspartyl-tRNA(Asn) + L-glutamine + ATP + H2O = L-asparaginyl-tRNA(Asn) + L-glutamate + ADP + phosphate + 2 H(+). Functionally, allows the formation of correctly charged Asn-tRNA(Asn) or Gln-tRNA(Gln) through the transamidation of misacylated Asp-tRNA(Asn) or Glu-tRNA(Gln) in organisms which lack either or both of asparaginyl-tRNA or glutaminyl-tRNA synthetases. The reaction takes place in the presence of glutamine and ATP through an activated phospho-Asp-tRNA(Asn) or phospho-Glu-tRNA(Gln). This chain is Aspartyl/glutamyl-tRNA(Asn/Gln) amidotransferase subunit B, found in Anaeromyxobacter sp. (strain K).